A 204-amino-acid polypeptide reads, in one-letter code: Large ribosomal subunit protein eL15 (204 aa).

The protein belongs to the eukaryotic ribosomal protein eL15 family. In terms of assembly, component of the large ribosomal subunit.

The protein localises to the cytoplasm. In terms of biological role, component of the large ribosomal subunit. The ribosome is a large ribonucleoprotein complex responsible for the synthesis of proteins in the cell. The polypeptide is Large ribosomal subunit protein eL15 (rpl15) (Tachysurus fulvidraco (Yellow catfish)).